We begin with the raw amino-acid sequence, 213 residues long: Large ribosomal subunit protein uL1 (213 aa).

This sequence belongs to the universal ribosomal protein uL1 family. Part of the 50S ribosomal subunit.

Binds directly to 23S rRNA. Probably involved in E site tRNA release. In terms of biological role, protein L1 is also a translational repressor protein, it controls the translation of its operon by binding to its mRNA. The polypeptide is Large ribosomal subunit protein uL1 (Methanosarcina acetivorans (strain ATCC 35395 / DSM 2834 / JCM 12185 / C2A)).